Reading from the N-terminus, the 245-residue chain is Demethylmenaquinone methyltransferase (245 aa).

S-adenosyl-L-methionine is bound by residues Thr69, Asp90, and 118-119 (DC).

This sequence belongs to the class I-like SAM-binding methyltransferase superfamily. MenG/UbiE family.

It carries out the reaction a 2-demethylmenaquinol + S-adenosyl-L-methionine = a menaquinol + S-adenosyl-L-homocysteine + H(+). It functions in the pathway quinol/quinone metabolism; menaquinone biosynthesis; menaquinol from 1,4-dihydroxy-2-naphthoate: step 2/2. Methyltransferase required for the conversion of demethylmenaquinol (DMKH2) to menaquinol (MKH2). This is Demethylmenaquinone methyltransferase from Porphyromonas gingivalis (strain ATCC 33277 / DSM 20709 / CIP 103683 / JCM 12257 / NCTC 11834 / 2561).